We begin with the raw amino-acid sequence, 367 residues long: Mannan endo-1,4-beta-mannosidase (367 aa).

Positions 1–17 (MLLTALAVLFASTGCQA) are cleaved as a signal peptide. Residues tryptophan 79 and asparagine 176 each contribute to the substrate site. Glutamate 177 acts as the Proton donor in catalysis. Cysteine 192 and cysteine 259 are joined by a disulfide. Residues tryptophan 205, tryptophan 240, and tyrosine 279 each coordinate substrate. The Nucleophile role is filled by glutamate 308. Tryptophan 337 is a binding site for substrate.

As to quaternary structure, monomer. In terms of processing, the disulfide bond between Cys-192 and Cys-259 has not been observed in X-ray crystallography. This may be a consequence of the X-ray radiation.

The enzyme catalyses Random hydrolysis of (1-&gt;4)-beta-D-mannosidic linkages in mannans, galactomannans and glucomannans.. In terms of biological role, hydrolyzes 1,4-beta linked polysaccharide backbones of mannans. Hydrolyzes mannohexaose (M6) preferentially to mannotriose (M4) and less preferentially to mannotetraose (M3), mannopentaose (M5), and mannobiose (M2); hydrolyzes M5 preferentially to M2, and M3, and less preferentially to mannotetraose M4; hydrolyzes M4 preferentially to M3, and less preferentially to mannose (M1), plus very little M2. Does not hydrolyze mannobiose or mannotriose. Does not hydrolyze xlyan, starch, cellulose or galactose. The protein is Mannan endo-1,4-beta-mannosidase of Mytilus edulis (Blue mussel).